The primary structure comprises 196 residues: Nucleoid occlusion factor SlmA (196 aa).

The 62-residue stretch at 7 to 68 (INRREEILQA…GLIEFIEESL (62 aa)) folds into the HTH tetR-type domain. A DNA-binding region (H-T-H motif) is located at residues 31–50 (TTAKLAKQVGVSEAALYRHF). A coiled-coil region spans residues 110–139 (HALMFENERLRDRINQLFERIETSLRQILR).

Belongs to the nucleoid occlusion factor SlmA family. Homodimer. Interacts with FtsZ.

Its subcellular location is the cytoplasm. It localises to the nucleoid. Functionally, required for nucleoid occlusion (NO) phenomenon, which prevents Z-ring formation and cell division over the nucleoid. Acts as a DNA-associated cell division inhibitor that binds simultaneously chromosomal DNA and FtsZ, and disrupts the assembly of FtsZ polymers. SlmA-DNA-binding sequences (SBS) are dispersed on non-Ter regions of the chromosome, preventing FtsZ polymerization at these regions. The sequence is that of Nucleoid occlusion factor SlmA from Vibrio cholerae serotype O1 (strain ATCC 39315 / El Tor Inaba N16961).